The sequence spans 336 residues: UDP-N-acetylenolpyruvoylglucosamine reductase (336 aa).

In terms of domain architecture, FAD-binding PCMH-type spans 17 to 188 (LRSLAERFVE…WDVTFRLPKK (172 aa)). Arg164 is an active-site residue. Ser237 serves as the catalytic Proton donor. The active site involves Glu332.

The protein belongs to the MurB family. FAD serves as cofactor.

Its subcellular location is the cytoplasm. It carries out the reaction UDP-N-acetyl-alpha-D-muramate + NADP(+) = UDP-N-acetyl-3-O-(1-carboxyvinyl)-alpha-D-glucosamine + NADPH + H(+). Its pathway is cell wall biogenesis; peptidoglycan biosynthesis. Functionally, cell wall formation. In Bdellovibrio bacteriovorus (strain ATCC 15356 / DSM 50701 / NCIMB 9529 / HD100), this protein is UDP-N-acetylenolpyruvoylglucosamine reductase.